Reading from the N-terminus, the 153-residue chain is Guanyl-specific ribonuclease N1 (153 aa).

The first 20 residues, 1 to 20 (MVQLLSAFVSLLSVVAVSGA), serve as a signal peptide directing secretion. Residues 21 to 49 (AIPAPAPEAVVDVAPETATIEPTGNFTAQ) constitute a propeptide that is removed on maturation. Intrachain disulfides connect Cys-51–Cys-59 and Cys-55–Cys-152. Residue His-89 is part of the active site. Glu-107 functions as the Proton acceptor in the catalytic mechanism. Catalysis depends on His-141, which acts as the Proton donor.

It belongs to the ribonuclease N1/T1 family.

It carries out the reaction [RNA] containing guanosine + H2O = an [RNA fragment]-3'-guanosine-3'-phosphate + a 5'-hydroxy-ribonucleotide-3'-[RNA fragment].. This is Guanyl-specific ribonuclease N1 (grn) from Neurospora crassa (strain ATCC 24698 / 74-OR23-1A / CBS 708.71 / DSM 1257 / FGSC 987).